The primary structure comprises 294 residues: N-acetylmuramic acid 6-phosphate etherase (294 aa).

Residues 54-217 form the SIS domain; it reads VTKSFEEEGR…STASMIGVGK (164 aa). The active-site Proton donor is glutamate 82. Residue glutamate 113 is part of the active site.

It belongs to the GCKR-like family. MurNAc-6-P etherase subfamily. As to quaternary structure, homodimer.

It carries out the reaction N-acetyl-D-muramate 6-phosphate + H2O = N-acetyl-D-glucosamine 6-phosphate + (R)-lactate. It functions in the pathway amino-sugar metabolism; N-acetylmuramate degradation. In terms of biological role, specifically catalyzes the cleavage of the D-lactyl ether substituent of MurNAc 6-phosphate, producing GlcNAc 6-phosphate and D-lactate. The chain is N-acetylmuramic acid 6-phosphate etherase from Bacillus mycoides (strain KBAB4) (Bacillus weihenstephanensis).